The sequence spans 200 residues: Ribosomal RNA large subunit methyltransferase E (200 aa).

Positions 49, 51, 69, 87, and 111 each coordinate S-adenosyl-L-methionine. Lysine 151 (proton acceptor) is an active-site residue.

Belongs to the class I-like SAM-binding methyltransferase superfamily. RNA methyltransferase RlmE family.

The protein localises to the cytoplasm. The enzyme catalyses uridine(2552) in 23S rRNA + S-adenosyl-L-methionine = 2'-O-methyluridine(2552) in 23S rRNA + S-adenosyl-L-homocysteine + H(+). In terms of biological role, specifically methylates the uridine in position 2552 of 23S rRNA at the 2'-O position of the ribose in the fully assembled 50S ribosomal subunit. This chain is Ribosomal RNA large subunit methyltransferase E, found in Lawsonia intracellularis (strain PHE/MN1-00).